A 3033-amino-acid polypeptide reads, in one-letter code: Genome polyprotein (3033 aa).

Ser-2 bears the N-acetylserine; by host mark. The interval 2-23 (STNPKPQRKTKRNTNRRPQDVK) is interaction with STAT1. Residues 2–58 (STNPKPQRKTKRNTNRRPQDVKFPGGGQIVGGVYLLPRRGPRLGVRATRKTSERSQP) are interaction with EIF2AK2/PKR. Residues 2 to 59 (STNPKPQRKTKRNTNRRPQDVKFPGGGQIVGGVYLLPRRGPRLGVRATRKTSERSQPR) form an interaction with DDX3X region. A disordered region spans residues 2 to 75 (STNPKPQRKT…PKDRRSTGKS (74 aa)). The Cytoplasmic portion of the chain corresponds to 2 to 168 (STNPKPQRKT…EDGVNFATGN (167 aa)). Short sequence motifs (nuclear localization signal) lie at residues 5 to 13 (PKPQRKTKR) and 38 to 43 (PRRGPR). Basic residues predominate over residues 7-16 (PQRKTKRNTN). Positions 32 to 47 (GGVYLLPRRGPRLGVR) are enriched in low complexity. Ser-53 is subject to Phosphoserine; by host. 2 consecutive short sequence motifs (nuclear localization signal) follow at residues 58-64 (PRGRRQP) and 66-71 (PKDRRS). Ser-99 is modified (phosphoserine; by host). Residues 112 to 152 (PRHRSRNVGKVIDTLTCGFADLMGYIPVVGAPLGGVARALA) form an important for endoplasmic reticulum and mitochondrial localization region. At Ser-116 the chain carries Phosphoserine; by host PKA. Residues 122 to 173 (VIDTLTCGFADLMGYIPVVGAPLGGVARALAHGVRVLEDGVNFATGNLPGCS) form an interaction with APOA2 region. The important for lipid droplets localization stretch occupies residues 164 to 167 (FATG). A helical membrane pass occupies residues 169 to 189 (LPGCSFSIFLLALLSCITTPV). Positions 178-191 (LLALLSCITTPVSA) are cleaved as a propeptide — ER anchor for the core protein, removed in mature form by host signal peptidase. Residues 190–358 (SAAEVKNIST…GGAHWGVMFG (169 aa)) are Lumenal-facing. Asn-196, Asn-209, and Asn-234 each carry an N-linked (GlcNAc...) asparagine; by host glycan. Positions 265–296 (VVMSATLCSALYVGDLCGGVMLAAQMFIVSPQ) are important for fusion. Asn-305 is a glycosylation site (N-linked (GlcNAc...) asparagine; by host). A helical membrane pass occupies residues 359–379 (LAYFSMQGAWAKVVVILLLAA). At 380–729 (GVDAQTHTVG…WEWVVLLFLL (350 aa)) the chain is on the lumenal side. The interval 385–411 (THTVGGSTAHNARTLTGMFSLGARQKI) is HVR1. Asn-417, Asn-423, Asn-430, and Asn-448 each carry an N-linked (GlcNAc...) (high mannose) asparagine; by host glycan. Intrachain disulfides connect Cys-429–Cys-554, Cys-452–Cys-459, Cys-488–Cys-496, and Cys-505–Cys-510. Asn-477 carries an N-linked (GlcNAc...) (high mannose) asparagine; by host glycan. Positions 484 to 496 (MRPYCWHYPPRQC) are CD81-binding 1. Residues 524-555 (LGAPTYTWGENETDVFLLNSTRPPQGSWFGCT) are CD81-binding 2. Asn-534, Asn-542, and Asn-558 each carry an N-linked (GlcNAc...) (high mannose) asparagine; by host glycan. A disulfide bond links Cys-566 and Cys-571. Residue Asn-578 is glycosylated (N-linked (GlcNAc...) (high mannose) asparagine; by host). Intrachain disulfides connect Cys-585-Cys-589, Cys-601-Cys-624, and Cys-611-Cys-648. Asn-627 and Asn-649 each carry an N-linked (GlcNAc...) (high mannose) asparagine; by host glycan. A disulfide bridge connects residues Cys-656 and Cys-681. The EIF2AK2/eIF2-alpha phosphorylation homology domain (PePHD) stretch occupies residues 664–675 (SQLSPLLHSTTE). A helical membrane pass occupies residues 730-750 (LADARVCACLWMLILLGQAEA). The Lumenal portion of the chain corresponds to 751 to 761 (ALEKLVVLHAA). Residues 762–782 (SAASCNGFLYFVIFFVAAWYI) traverse the membrane as a helical segment. Residues 783 to 786 (KGRV) lie on the Cytoplasmic side of the membrane. A helical membrane pass occupies residues 787 to 807 (VPLATYSLTGLWSFGLLLLAL). Residues 808-817 (PQQAYAYDAS) are Lumenal-facing. Residues 818-838 (VHGQIGAALLVLITLFTLTPG) form a helical membrane-spanning segment. Topologically, residues 839–885 (YKTLLSRFLWWLCYLLTLAEAMVQEWAPPMQVRGGRDGIIWAVAIFC) are cytoplasmic. The helical transmembrane segment at 886–906 (PGVVFDITKWLLAVLGPAYLL) threads the bilayer. Over 907 to 932 (KGALTRVPYFVRAHALLRMCTMVRHL) the chain is Lumenal. One can recognise a Peptidase C18 domain in the interval 907–1030 (KGALTRVPYF…GYTSKGWSLL (124 aa)). The tract at residues 908–1210 (GALTRVPYFV…PVETLDIVTR (303 aa)) is protease NS2-3. Cys-926 carries the S-palmitoyl cysteine; by host lipid modification. The chain crosses the membrane as a helical span at residues 933–953 (AGGRYVQMVLLALGRWTGTYI). The segment at 933-953 (AGGRYVQMVLLALGRWTGTYI) is interaction with host SCPS1. Over 954–1661 (YDHLTPMSDW…CMQADLEVMT (708 aa)) the chain is Cytoplasmic. Catalysis depends on for protease NS2 activity; shared with dimeric partner residues His-956, Glu-976, and Cys-997. The region spanning 1031–1212 (APITAYAQQT…ETLDIVTRSP (182 aa)) is the Peptidase S29 domain. Catalysis depends on charge relay system; for serine protease NS3 activity residues His-1087 and Asp-1111. Positions 1127 and 1129 each coordinate Zn(2+). The Charge relay system; for serine protease NS3 activity role is filled by Ser-1169. Residues Cys-1175 and His-1179 each coordinate Zn(2+). A Helicase ATP-binding domain is found at 1221-1373 (PAVPQTYQVG…PNIEEVALGQ (153 aa)). 1234-1241 (APTGSGKS) contributes to the ATP binding site. 2 residues coordinate Mg(2+): Ser-1241 and Glu-1321. A DECH box motif is present at residues 1320-1323 (DECH). The interval 1490 to 1501 (QRRGRTGRGRLG) is RNA-binding. Residues 1662–1682 (STWVLAGGVLAAVAAYCLATG) form a helical membrane-spanning segment. Residues 1683-1694 (CVCIIGRLHVNQ) are NS3-binding. At 1683 to 1809 (CVCIIGRLHV…ALTSPLSTST (127 aa)) the chain is on the cytoplasmic side. Residues 1810-1830 (TILLNILGGWLASQIAPPAGA) form a helical membrane-spanning segment. The Lumenal segment spans residues 1831 to 1832 (TG). A helical membrane pass occupies residues 1833–1853 (FVVSGLVGAAVGSIGLGKVLV). The segment at 1837–1865 (GLVGAAVGSIGLGKVLVDILAGYGAGISG) is glycine zipper. Asp-1854 is a topological domain (cytoplasmic). The helical transmembrane segment at 1855–1875 (ILAGYGAGISGALVAFKIMSG) threads the bilayer. The Lumenal segment spans residues 1876–1885 (EKPSMEDVVN). A helical transmembrane segment spans residues 1886–1906 (LLPGILSPGALVVGVICAAIL). At 1907 to 1976 (RRHVGPGEGA…WITEDCPIPC (70 aa)) the chain is on the cytoplasmic side. Cys-1972 is lipidated: S-palmitoyl cysteine; by host. The S-palmitoyl cysteine; by host; partial moiety is linked to residue Cys-1976. Residues 1977 to 2007 (SGSWLRDVWDWVCTILTDFKNWLTSKLFPKM) lie within the membrane without spanning it. A membrane-binding region spans residues 1982–2002 (RDVWDWVCTILTDFKNWLTSK). At 2008–3012 (PGLPFISCQK…YHSVSRARPR (1005 aa)) the chain is on the cytoplasmic side. Positions 2009–2225 (GLPFISCQKG…RATCTTHGKA (217 aa)) are RNA-binding. 4 residues coordinate Zn(2+): Cys-2015, Cys-2033, Cys-2035, and Cys-2056. Tyr-2069 is subject to Phosphotyrosine; by host. The interval 2124 to 2212 (EFFSWVDGVQ…ASSSASQLSA (89 aa)) is FKBP8-binding. The tract at residues 2124–2332 (EFFSWVDGVQ…PTPPPRRRRT (209 aa)) is transcriptional activation. The tract at residues 2139–2143 (PIPKP) is interaction with non-structural protein 4A. 2 disordered regions span residues 2193 to 2214 (RLAR…SAPS) and 2309 to 2335 (ATVA…TVGL). Ser-2198 bears the Phosphoserine; by host; in p56 mark. Low complexity predominate over residues 2198–2214 (SPPSEASSSASQLSAPS). Ser-2201 is modified (phosphoserine; by host; in p58). A Phosphoserine; by host; in p56 and p58, regulates intracellular NS5A distribution modification is found at Ser-2205. Phosphoserine; by host; in p58 is present on residues Ser-2208, Ser-2211, and Ser-2214. The segment at 2210-2249 (LSAPSLRATCTTHGKAYDVDMVDANLFMGGDVTRIESESK) is ISDR. Residues 2214–2275 (SLRATCTTHG…LEPSIPSEYM (62 aa)) form an interaction with EIF2AK2/PKR region. The interval 2253 to 2310 (LDSLDPMVEERSDLEPSIPSEYMLPKKRFPPALPAWARPDYNPPLVESWKRPDYQPAT) is NS4B-binding. The segment covering 2316 to 2326 (LPPPKKTPTPP) has biased composition (pro residues). The short motif at 2322–2325 (TPTP) is the SH3-binding element. Thr-2324 is subject to Phosphothreonine; by host. Positions 2326 to 2334 (PPRRRRTVG) match the Nuclear localization signal motif. The segment at 2336-2447 (SESSIADALQ…SVVCCSMSYS (112 aa)) is interaction with host IFI27. Lys-2350 is covalently cross-linked (Glycyl lysine isopeptide (Lys-Gly) (interchain with G-Cter in ubiquitin)). Residues 2351–2431 (SFGQPPPSGD…PGSGSGSWST (81 aa)) are disordered. A V3 region spans residues 2358–2381 (SGDSGLSTGADAADSGSRTPPDEL). A compositionally biased stretch (acidic residues) spans 2398–2408 (EPGDPDLEPEQ). Low complexity predominate over residues 2417 to 2431 (GGVVTPGSGSGSWST). The RdRp catalytic domain occupies 2656–2774 (PMGFSYDTRC…ISESQGTEED (119 aa)). Mg(2+) contacts are provided by Asp-2662, Asp-2760, and Asp-2761. Residues 3013–3033 (LLLLGLLLLFVGVGLFLLPAR) form a helical membrane-spanning segment.

It belongs to the hepacivirus polyprotein family. Homooligomer. Interacts with E1 (via C-terminus). Interacts with the non-structural protein 5A. Interacts (via N-terminus) with host STAT1 (via SH2 domain); this interaction results in decreased STAT1 phosphorylation and ubiquitin-mediated proteasome-dependent STAT1 degradation, leading to decreased IFN-stimulated gene transcription. Interacts with host STAT3; this interaction constitutively activates STAT3. Interacts with host LTBR receptor. Interacts with host TNFRSF1A receptor and possibly induces apoptosis. Interacts with host HNRPK. Interacts with host YWHAE. Interacts with host UBE3A/E6AP. Interacts with host DDX3X. Interacts with host APOA2. Interacts with host RXRA protein. Interacts with host SP110 isoform 3/Sp110b; this interaction sequesters the transcriptional corepressor SP110 away from the nucleus. Interacts with host CREB3 nuclear transcription protein; this interaction triggers cell transformation. Interacts with host ACY3. Interacts with host C1QR1. Interacts with host RBM24; this interaction, which enhances the interaction of the mature core protein with 5'-UTR, may inhibit viral translation and favor replication. Interacts with host EIF2AK2/PKR; this interaction induces the autophosphorylation of EIF2AK2. Part of the viral assembly initiation complex composed of NS2, E1, E2, NS3, NS4A, NS5A and the mature core protein. In terms of assembly, forms a heterodimer with envelope glycoprotein E2. Interacts with mature core protein. Interacts with protease NS2. The heterodimer E1/E2 interacts with host CLDN1; this interaction plays a role in viral entry into host cell. Interacts with host SPSB2 (via C-terminus). Part of the viral assembly initiation complex composed of NS2, E1, E2, NS3, NS4A, NS5A and the mature core protein. Interacts with host NEURL3; this interaction prevents E1 binding to glycoprotein E2. As to quaternary structure, forms a heterodimer with envelope glycoprotein E1. Interacts with host CD81 and SCARB1 receptors; this interaction may play a role in viral entry into host cell. Interacts with host EIF2AK2/PKR; this interaction inhibits EIF2AK2 and probably allows the virus to evade the innate immune response. Interacts with host CD209/DC-SIGN and CLEC4M/DC-SIGNR. Interact with host SPCS1; this interaction is essential for viral particle assembly. Interacts with protease NS2. The heterodimer E1/E2 interacts with host CLDN1; this interaction plays a role in viral entry into host cell. Part of the viral assembly initiation complex composed of NS2, E1, E2, NS3, NS4A, NS5A and the mature core protein. Interacts with host SLC3A2/4F2hc; the interaction may facilitate viral entry into host cell. Interacts with human PLSCR1. Homohexamer. Homoheptamer. Interacts with protease NS2. In terms of assembly, homodimer. Interacts with host SPCS1; this interaction is essential for viral particle assembly. Interacts with envelope glycoprotein E1. Interacts with envelope glycoprotein E2. Interacts with viroporin p7. Interacts with serine protease/helicase NS3. Part of the replication complex composed of NS2, NS3, NS4A, NS4B, NS5A and the RNA-directed RNA polymerase embedded in an ER-derived membranous web. Part of the viral assembly initiation complex composed of NS2, E1, E2, NS3, NS4A, NS5A and the mature core protein. As to quaternary structure, interacts with protease NS2. Interacts with non-structural protein 4A; this interaction stabilizes the folding of NS3 serine protease. NS3-NS4A interaction is essential for NS3 activation and allows membrane anchorage of the latter. NS3/NS4A complex also prevents phosphorylation of host IRF3, thus preventing the establishment of dsRNA induced antiviral state. Interacts with host MAVS; this interaction leads to the cleavage and inhibition of host MAVS. Interacts with host TICAM1; this interaction leads to the cleavage and inhibition of host TICAM1. Interacts with host TANK-binding kinase/TBK1; this interaction results in the inhibition of the association between TBK1 and IRF3, which leads to the inhibition of IRF3 activation. Interacts with host RBM24. Part of the replication complex composed of NS2, NS3, NS4A, NS4B, NS5A and the RNA-directed RNA polymerase embedded in an ER-derived membranous web. Part of the viral assembly initiation complex composed of NS2, E1, E2, NS3, NS4A, NS5A and the mature core protein. Interacts with NS3 serine protease; this interaction stabilizes the folding of NS3 serine protease. NS3-NS4A interaction is essential for NS3 activation and allows membrane anchorage of the latter. Interacts with non-structural protein 5A (via N-terminus). Part of the replication complex composed of NS2, NS3, NS4A, NS4B, NS5A and the RNA-directed RNA polymerase embedded in an ER-derived membranous web. Part of the viral assembly initiation complex composed of NS2, E1, E2, NS3, NS4A, NS5A and the mature core protein. In terms of assembly, homomultimer. Interacts with non-structural protein NS5A. Interacts with host PLA2G4C; this interaction likely initiates the recruitment of replication complexes to lipid droplets. Interacts with host STING; this interaction disrupts the interaction between STING and TBK1 thereby suppressing the interferon signaling. Part of the replication complex composed of NS2, NS3, NS4A, NS4B, NS5A and the RNA-directed RNA polymerase embedded in an ER-derived membranous web. As to quaternary structure, monomer. Homodimer; dimerization is required for RNA-binding. Interacts with the mature core protein. Interacts (via N-terminus) with non-structural protein 4A. Interacts with non-structural protein 4B. Interacts (via region D2) with RNA-directed RNA polymerase. Part of the viral assembly initiation complex composed of NS2, E1, E2, NS3, NS4A, NS5A and the mature core protein. Part of the replication complex composed of NS2, NS3, NS4A, NS4B, NS5A and the RNA-directed RNA polymerase embedded in an ER-derived membranous web. Interacts with host GRB2. Interacts with host BIN1. Interacts with host PIK3R1. Interacts with host SRCAP. Interacts with host FKBP8. Interacts (via C-terminus) with host VAPB (via MSP domain). Interacts with host EIF2AK2/PKR; this interaction leads to disruption of EIF2AK2 dimerization by NS5A and probably allows the virus to evade the innate immune response. Interacts (via N-terminus) with host PACSIN2 (via N-terminus); this interaction attenuates protein kinase C alpha-mediated phosphorylation of PACSIN2 by disrupting the interaction between PACSIN2 and PRKCA. Interacts (via N-terminus) with host SRC kinase (via SH2 domain). Interacts with most Src-family kinases. Interacts with host IFI27 and SKP2; promotes the ubiquitin-mediated proteasomal degradation of NS5A. Interacts with host GPS2. Interacts with host TNFRSF21; this interaction allows the modulation by the virus of JNK, p38 MAPK, STAT3, and Akt signaling pathways in a DR6-dependent manner. Interacts (via N-terminus) with host CIDEB (via N-terminus); this interaction seems to regulate the association of HCV particles with APOE. Interacts with host CHKA/Choline Kinase-alpha; CHKA bridges host PI4KA and NS5A and potentiates NS5A-stimulated PI4KA activity, which then facilitates the targeting of the ternary complex to the ER for viral replication. Interacts with host SPSB2 (via C-terminus); this interaction targets NS5A for ubiquitination and degradation. Interacts with host RAB18; this interaction may promote the association of NS5A and other replicase components with lipid droplets. Interacts (via region D2) with host PPIA/CYPA; the interaction stimulates RNA-binding ability of NS5A and is dependent on the peptidyl-prolyl cis-trans isomerase activity of PPIA/CYPA. Interacts with host TRIM14; this interaction induces the degradation of NS5A. Homooligomer. Interacts with non-structural protein 5A. Interacts with host VAPB. Interacts with host PRK2/PKN2. Interacts with host HNRNPA1 and SEPT6; these interactions facilitate viral replication. Part of the replication complex composed of NS2, NS3, NS4A, NS4B, NS5A and the RNA-directed RNA polymerase. Zn(2+) is required as a cofactor. It depends on Mg(2+) as a cofactor. Post-translationally, specific enzymatic cleavages in vivo yield mature proteins. The structural proteins, core, E1, E2 and p7 are produced by proteolytic processing by host signal peptidases. The core protein precursor is synthesized as a 23 kDa, which is retained in the ER membrane through the hydrophobic signal peptide. Cleavage by the signal peptidase releases the 21 kDa mature core protein. The cleavage of the core protein precursor occurs between aminoacids 176 and 188 but the exact cleavage site is not known. Some degraded forms of the core protein appear as well during the course of infection. The other proteins (p7, NS2, NS3, NS4A, NS4B, NS5A and NS5B) are cleaved by the viral proteases. Autoprocessing between NS2 and NS3 is mediated by the NS2 cysteine protease catalytic domain and regulated by the NS3 N-terminal domain. In terms of processing, phosphorylated by host PKC and PKA. Ubiquitinated; mediated by UBE3A and leading to core protein subsequent proteasomal degradation. Post-translationally, highly N-glycosylated. In terms of processing, palmitoylation is required for NS2/3 autoprocessing and E2 recruitment to membranes. Palmitoylated. This modification may play a role in its polymerization or in protein-protein interactions. Post-translationally, phosphorylated on serines in a basal form termed p56. p58 is a hyperphosphorylated form of p56. p56 and p58 coexist in the cell in roughly equivalent amounts. Hyperphosphorylation is dependent on the presence of NS4A. Host CSNK1A1/CKI-alpha or RPS6KB1 kinases may be responsible for NS5A phosphorylation. In terms of processing, tyrosine phosphorylation is essential for the interaction with host SRC. The N-terminus is phosphorylated by host PRK2/PKN2.

It localises to the host endoplasmic reticulum membrane. The protein localises to the host mitochondrion membrane. The protein resides in the virion. Its subcellular location is the host cytoplasm. It is found in the host nucleus. It localises to the host lipid droplet. The protein localises to the virion membrane. The protein resides in the host mitochondrion. Its subcellular location is the host cell membrane. It is found in the host perinuclear region. The catalysed reaction is Hydrolysis of four peptide bonds in the viral precursor polyprotein, commonly with Asp or Glu in the P6 position, Cys or Thr in P1 and Ser or Ala in P1'.. The enzyme catalyses a ribonucleoside 5'-triphosphate + H2O = a ribonucleoside 5'-diphosphate + phosphate + H(+). It catalyses the reaction ATP + H2O = ADP + phosphate + H(+). It carries out the reaction RNA(n) + a ribonucleoside 5'-triphosphate = RNA(n+1) + diphosphate. Inhibited by the antiviral drug hexamethylene amiloride. Inhibition by amantadine appears to be genotype-dependent. Also inhibited by long-alkyl-chain iminosugar derivatives. Its activity is regulated as follows. Activity is up-regulated by PRK2/PKN2-mediated phosphorylation. Packages viral RNA to form a viral nucleocapsid, and promotes virion budding. Participates in the viral particle production as a result of its interaction with the non-structural protein 5A. Binds RNA and may function as a RNA chaperone to induce the RNA structural rearrangements taking place during virus replication. Modulates viral translation initiation by interacting with viral IRES and 40S ribosomal subunit. Affects various cell signaling pathways, host immunity and lipid metabolism. Prevents the establishment of cellular antiviral state by blocking the interferon-alpha/beta (IFN-alpha/beta) and IFN-gamma signaling pathways and by blocking the formation of phosphorylated STAT1 and promoting ubiquitin-mediated proteasome-dependent degradation of STAT1. Activates STAT3 leading to cellular transformation. Regulates the activity of cellular genes, including c-myc and c-fos. May repress the promoter of p53, and sequester CREB3 and SP110 isoform 3/Sp110b in the cytoplasm. Represses cell cycle negative regulating factor CDKN1A, thereby interrupting an important check point of normal cell cycle regulation. Targets transcription factors involved in the regulation of inflammatory responses and in the immune response: suppresses TNF-induced NF-kappa-B activation, and activates AP-1. Binds to dendritic cells (DCs) via C1QR1, resulting in down-regulation of T-lymphocytes proliferation. Alters lipid metabolism by interacting with hepatocellular proteins involved in lipid accumulation and storage. Induces up-regulation of FAS promoter activity, and thereby contributes to the increased triglyceride accumulation in hepatocytes (steatosis). Functionally, forms a heterodimer with envelope glycoprotein E2, which mediates virus attachment to the host cell, virion internalization through clathrin-dependent endocytosis and fusion with host membrane. Fusion with the host cell is most likely mediated by both E1 and E2, through conformational rearrangements of the heterodimer required for fusion rather than a classical class II fusion mechanism. E1/E2 heterodimer binds host apolipoproteins such as APOB and APOE thereby forming a lipo-viro-particle (LVP). APOE associated to the LVP allows the initial virus attachment to cell surface receptors such as the heparan sulfate proteoglycans (HSPGs), syndecan-1 (SDC1), syndecan-1 (SDC2), the low-density lipoprotein receptor (LDLR) and scavenger receptor class B type I (SCARB1). The cholesterol transfer activity of SCARB1 allows E2 exposure and binding of E2 to SCARB1 and the tetraspanin CD81. E1/E2 heterodimer binding on CD81 activates the epithelial growth factor receptor (EGFR) signaling pathway. Diffusion of the complex E1-E2-EGFR-SCARB1-CD81 to the cell lateral membrane allows further interaction with Claudin 1 (CLDN1) and occludin (OCLN) to finally trigger HCV entry. Its function is as follows. Forms a heterodimer with envelope glycoprotein E1, which mediates virus attachment to the host cell, virion internalization through clathrin-dependent endocytosis and fusion with host membrane. Fusion with the host cell is most likely mediated by both E1 and E2, through conformational rearrangements of the heterodimer required for fusion rather than a classical class II fusion mechanism. The interaction between envelope glycoprotein E2 and host apolipoprotein E/APOE allows the proper assembly, maturation and infectivity of the viral particles. This interaction is probably promoted via the up-regulation of cellular autophagy by the virus. E1/E2 heterodimer binds host apolipoproteins such as APOB and APOE thereby forming a lipo-viro-particle (LVP). APOE associated to the LVP allows the initial virus attachment to cell surface receptors such as the heparan sulfate proteoglycans (HSPGs), syndecan-1 (SDC1), syndecan-1 (SDC2), the low-density lipoprotein receptor (LDLR) and scavenger receptor class B type I (SCARB1). The cholesterol transfer activity of SCARB1 allows E2 exposure and binding of E2 to SCARB1 and the tetraspanin CD81. E1/E2 heterodimer binding on CD81 activates the epithelial growth factor receptor (EGFR) signaling pathway. Diffusion of the complex E1-E2-EGFR-SCARB1-CD81 to the cell lateral membrane allows further interaction with Claudin 1 (CLDN1) and occludin (OCLN) to finally trigger HCV entry. Inhibits host EIF2AK2/PKR activation, preventing the establishment of an antiviral state. Viral ligand for CD209/DC-SIGN and CLEC4M/DC-SIGNR, which are respectively found on dendritic cells (DCs), and on liver sinusoidal endothelial cells and macrophage-like cells of lymph node sinuses. These interactions allow the capture of circulating HCV particles by these cells and subsequent facilitated transmission to permissive cells such as hepatocytes and lymphocyte subpopulations. The interaction between E2 and host amino acid transporter complex formed by SLC3A2 and SLC7A5/LAT1 may facilitate viral entry into host cell. In terms of biological role, ion channel protein that acts as a viroporin and plays an essential role in the assembly, envelopment and secretion of viral particles. Regulates the host cell secretory pathway, which induces the intracellular retention of viral glycoproteins and favors assembly of viral particles. Creates a pore in acidic organelles and releases Ca(2+) and H(+) in the cytoplasm of infected cells, leading to a productive viral infection. High levels of cytoplasmic Ca(2+) may trigger membrane trafficking and transport of viral ER-associated proteins to viroplasms, sites of viral genome replication. This ionic imbalance induces the assembly of the inflammasome complex, which triggers the maturation of pro-IL-1beta into IL-1beta through the action of caspase-1. Targets also host mitochondria and induces mitochondrial depolarization. In addition of its role as a viroporin, acts as a lipid raft adhesion factor. Cysteine protease required for the proteolytic auto-cleavage between the non-structural proteins NS2 and NS3. The N-terminus of NS3 is required for the function of NS2 protease (active region NS2-3). Promotes the initiation of viral particle assembly by mediating the interaction between structural and non-structural proteins. Functionally, displays three enzymatic activities: serine protease with a chymotrypsin-like fold, NTPase and RNA helicase. NS3 serine protease, in association with NS4A, is responsible for the cleavages of NS3-NS4A, NS4A-NS4B, NS4B-NS5A and NS5A-NS5B. The NS3/NS4A complex prevents phosphorylation of host IRF3, thus preventing the establishment of dsRNA induced antiviral state. The NS3/NS4A complex induces host amino acid transporter component SLC3A2, thus contributing to HCV propagation. NS3 RNA helicase binds to RNA and unwinds both dsDNA and dsRNA in the 3' to 5' direction, and likely resolves RNA complicated stable secondary structures in the template strand. Binds a single ATP and catalyzes the unzipping of a single base pair of dsRNA. Inhibits host antiviral proteins TBK1 and IRF3 thereby preventing the establishment of an antiviral state. Cleaves host MAVS/CARDIF thereby preventing the establishment of an antiviral state. Cleaves host TICAM1/TRIF, thereby disrupting TLR3 signaling and preventing the establishment of an antiviral state. Its function is as follows. Induces a specific membrane alteration that serves as a scaffold for the virus replication complex. This membrane alteration gives rise to the so-called ER-derived membranous web that contains the replication complex. NS4B self-interaction contributes to its function in membranous web formation. Promotes host TRIF protein degradation in a CASP8-dependent manner thereby inhibiting host TLR3-mediated interferon signaling. Disrupts the interaction between STING and TBK1 contributing to the inhibition of interferon signaling. In terms of biological role, phosphorylated protein that is indispensable for viral replication and assembly. Both hypo- and hyperphosphorylated states are required for the viral life cycle. The hyperphosphorylated form of NS5A is an inhibitor of viral replication. Involved in RNA-binding and especially in binding to the viral genome. Zinc is essential for RNA-binding. Participates in the viral particle production as a result of its interaction with the mature viral core protein. Its interaction with host VAPB may target the viral replication complex to vesicles. Down-regulates viral IRES translation initiation. Mediates interferon resistance, presumably by interacting with and inhibiting host EIF2AK2/PKR. Prevents BIN1-induced apoptosis. Acts as a transcriptional activator of some host genes important for viral replication when localized in the nucleus. Via the interaction with host PACSIN2, modulates lipid droplet formation in order to promote virion assembly. Modulates TNFRSF21/DR6 signaling pathway for viral propagation. RNA-dependent RNA polymerase that performs primer-template recognition and RNA synthesis during viral replication. Initiates RNA transcription/replication at a flavin adenine dinucleotide (FAD), resulting in a 5'- FAD cap on viral RNAs. In this way, recognition of viral 5' RNA by host pattern recognition receptors can be bypassed, thereby evading activation of antiviral pathways. The chain is Genome polyprotein from Homo sapiens (Human).